Reading from the N-terminus, the 242-residue chain is tRNA (guanine-N(1)-)-methyltransferase (242 aa).

Residues glycine 108 and 127-132 (IGDYVL) contribute to the S-adenosyl-L-methionine site.

It belongs to the RNA methyltransferase TrmD family. As to quaternary structure, homodimer.

Its subcellular location is the cytoplasm. It carries out the reaction guanosine(37) in tRNA + S-adenosyl-L-methionine = N(1)-methylguanosine(37) in tRNA + S-adenosyl-L-homocysteine + H(+). In terms of biological role, specifically methylates guanosine-37 in various tRNAs. The protein is tRNA (guanine-N(1)-)-methyltransferase of Lactobacillus acidophilus (strain ATCC 700396 / NCK56 / N2 / NCFM).